Consider the following 127-residue polypeptide: Small ribosomal subunit protein uS12 (127 aa).

Residues 11–20 (GRKPKKKKSK) are compositionally biased toward basic residues. The segment at 11–30 (GRKPKKKKSKAPALQGNPQK) is disordered. Position 89 is a 3-methylthioaspartic acid (Asp89). A disordered region spans residues 105-127 (AGVEGRRQSRSKYGAKRPKDQKK). Basic residues predominate over residues 112-127 (QSRSKYGAKRPKDQKK).

The protein belongs to the universal ribosomal protein uS12 family. Part of the 30S ribosomal subunit. Contacts proteins S8 and S17. May interact with IF1 in the 30S initiation complex.

In terms of biological role, with S4 and S5 plays an important role in translational accuracy. Interacts with and stabilizes bases of the 16S rRNA that are involved in tRNA selection in the A site and with the mRNA backbone. Located at the interface of the 30S and 50S subunits, it traverses the body of the 30S subunit contacting proteins on the other side and probably holding the rRNA structure together. The combined cluster of proteins S8, S12 and S17 appears to hold together the shoulder and platform of the 30S subunit. The sequence is that of Small ribosomal subunit protein uS12 from Thermotoga maritima (strain ATCC 43589 / DSM 3109 / JCM 10099 / NBRC 100826 / MSB8).